A 443-amino-acid polypeptide reads, in one-letter code: Proline--tRNA ligase (443 aa).

It belongs to the class-II aminoacyl-tRNA synthetase family. ProS type 2 subfamily. Homodimer.

It is found in the cytoplasm. The enzyme catalyses tRNA(Pro) + L-proline + ATP = L-prolyl-tRNA(Pro) + AMP + diphosphate. Its function is as follows. Catalyzes the attachment of proline to tRNA(Pro) in a two-step reaction: proline is first activated by ATP to form Pro-AMP and then transferred to the acceptor end of tRNA(Pro). This chain is Proline--tRNA ligase, found in Zymomonas mobilis subsp. mobilis (strain ATCC 10988 / DSM 424 / LMG 404 / NCIMB 8938 / NRRL B-806 / ZM1).